A 387-amino-acid polypeptide reads, in one-letter code: Norsolorinic acid reductase stcV (387 aa).

Aspartate 69 serves as a coordination point for NADP(+). The active-site Proton donor is tyrosine 74. Histidine 148 provides a ligand contact to substrate. NADP(+) contacts are provided by residues 178-179, glutamine 204, 233-243, and 301-309; these read SD, GALGRGQYKSA, and RTVEQLEAN.

Belongs to the aldo/keto reductase family. Aldo/keto reductase 2 subfamily.

The protein operates within mycotoxin biosynthesis; sterigmatocystin biosynthesis. Functionally, norsolorinic acid reductase; part of the gene cluster that mediates the biosynthesis of sterigmatocystin (ST), a polyketide-derived furanocoumarin which is part of the most toxic and carcinogenic compounds among the known mycotoxins. The first step in the biosynthesis of sterigmatocystin is the production of hexanoate by the fatty acid synthase (FAS) units stcJ and stcK. The polyketide backbone is assembled by the non-reducing polyketide synthase stcA by condensation of the starter hexanoyl-CoA and 7 malonyl-CoA extender units followed by cyclization and release of norsolorinic acid. Norsolorinic acid is the first stable intermediate in the biosynthesis of sterigmatocystin and is converted into averantin (AVN) by the ketoreductase stcE which reduces the hexanoate ketone to an alcohol. Averantin is then oxidized into 5'-hydroxyaverantin (HAVN) by the cytochrome P450 monooxygenase stcF. 5'-hydroxyaverantin is further converted to 5'-oxyaverantin (OAVN) by the 5'-hydroxyaverantin dehydrogenase stcG. The next step is the conversion of OAVN into averufin (AVF) which is catalyzed by a yet to be identified enzyme. The cytochrome P450 monooxygenase stcB and the flavin-binding monooxygenase stcW are both required for the conversion of averufin to 1-hydroxyversicolorone. The esterase stcI probably catalyzes the formation of versiconal hemiacetal acetate from 1-hydroxyversicolorone. The oxydoreductase stcN then probably catalyzes the biosynthetic step from versiconal to versicolorin B (VERB). The next step is performed by the versicolorin B desaturase stcL to produce versicolorin A (VERA). The ketoreductase stcU and the cytochrome P450 monooxygenase stcS are involved in the conversion of versicolorin A to demethylsterigmatocystin. The Baeyer-Villiger oxidas stcQ and the reductase stcR might be involved in the biosynthetic step from versicolorin A to demethylsterigmatocystin. The final step in the biosynthesis of sterigmatocystin is the methylation of demethylsterigmatocystin catalyzed by the methyltransferase stcP. This is Norsolorinic acid reductase stcV from Emericella nidulans (strain FGSC A4 / ATCC 38163 / CBS 112.46 / NRRL 194 / M139) (Aspergillus nidulans).